We begin with the raw amino-acid sequence, 459 residues long: MADLASHPVGQPLGGGGVSFGTDGIRGRVGTVMTPALALQVGYWSGQVLPGDAPVLLGMDSRSSGPMLVAALEAGLTAAGREVWTLGLCPTPAVARLVNQFQAAGGLMVSASHNPPEDNGIKLFGPSGAKLSRDQQQAIEAGLRGEVRPALTSCGPTQRRTELLESYTALLENSLEGRRLDGRRIVLDLCWGSATSCAESLFRRLGAEVIALHSQPDGAAINVGCGSTHLEPLRQAVMEHGAEMGFAFDGDADRVLAVDGQGRLVDGDHILYLWGSALADADALPQQRLVATVMSNLGFERAWTARGGQLERTAVGDQHVHAAMAELGAVLGGEQSGHIISADHGMSGDGVLTALQLAALLQPGETLSDRVDQSFRSFPQRLRNVRVPDRDRRKGWQQCDGLTTAIAAAEAAMGDEGRVLVRASGTEPLLRVMVEASSQEQVDHWTDHLSELADQLLNV.

The active-site Phosphoserine intermediate is serine 112. Residues serine 112, aspartate 249, aspartate 251, and aspartate 253 each coordinate Mg(2+). A Phosphoserine modification is found at serine 112.

Belongs to the phosphohexose mutase family. Requires Mg(2+) as cofactor. Post-translationally, activated by phosphorylation.

It catalyses the reaction alpha-D-glucosamine 1-phosphate = D-glucosamine 6-phosphate. Catalyzes the conversion of glucosamine-6-phosphate to glucosamine-1-phosphate. The polypeptide is Phosphoglucosamine mutase (Synechococcus sp. (strain RCC307)).